Consider the following 259-residue polypeptide: Global transcriptional regulator CodY (259 aa).

The interval 1–155 (MELLAKTRKL…SATVVGMEIL (155 aa)) is GAF domain. The H-T-H motif DNA-binding region spans 203–222 (ASKIADRVGITRSVIVNALR). Phosphoserine is present on serine 215.

It belongs to the CodY family.

The protein resides in the cytoplasm. Its function is as follows. DNA-binding global transcriptional regulator which is involved in the adaptive response to starvation and acts by directly or indirectly controlling the expression of numerous genes in response to nutrient availability. During rapid exponential growth, CodY is highly active and represses genes whose products allow adaptation to nutrient depletion. The chain is Global transcriptional regulator CodY from Bacillus cytotoxicus (strain DSM 22905 / CIP 110041 / 391-98 / NVH 391-98).